The following is a 404-amino-acid chain: uncharacterized protein (404 aa).

This sequence belongs to the lymphocryptovirus BTRF1 family.

This is an uncharacterized protein from Epstein-Barr virus (strain GD1) (HHV-4).